A 475-amino-acid polypeptide reads, in one-letter code: Ataxin-10 (475 aa).

Arg10 carries the omega-N-methylarginine modification. 2 positions are modified to phosphoserine: Ser12 and Ser77. Thr82 is modified (phosphothreonine). Phosphoserine is present on Ser430.

Belongs to the ataxin-10 family. Homooligomer. Interacts with GNB2. Interacts with IQCB1. Interacts with OGT. Post-translationally, polyubiquitinated. Phosphorylation at Ser-12 by AURKB promotes the association of ATXN10 with PLK1. Phosphorylation at Ser-77 and Thr-82 by PLK1 may play a role in the regulation of cytokinesis and may stimulate the proteasome-mediated degradation of ATXN10.

The protein resides in the cytoplasm. The protein localises to the perinuclear region. It is found in the midbody. It localises to the cytoskeleton. Its subcellular location is the cilium basal body. The protein resides in the microtubule organizing center. The protein localises to the centrosome. It is found in the centriole. Its function is as follows. May play a role in the regulation of cytokinesis. May play a role in signaling by stimulating protein glycosylation. Induces neuritogenesis by activating the Ras-MAP kinase pathway and is necessary for the survival of cerebellar neurons. Does not appear to play a major role in ciliogenesis. The sequence is that of Ataxin-10 (ATXN10) from Macaca fascicularis (Crab-eating macaque).